The following is a 309-amino-acid chain: Serine/threonine-protein phosphatase 2A catalytic subunit alpha isoform (309 aa).

Mn(2+) is bound by residues Asp57, His59, Asp85, and Asn117. Residues Asp57, His59, and Asp85 each coordinate Zn(2+). Fe(3+) is bound by residues Asp85 and Asn117. His118 (proton donor) is an active-site residue. Mn(2+) is bound by residues His167 and His241. 2 residues coordinate Fe(3+): His167 and His241. A Phosphotyrosine modification is found at Tyr307. Leu309 carries the post-translational modification Leucine methyl ester.

This sequence belongs to the PPP phosphatase family. PP-1 subfamily. In terms of assembly, PP2A consists of a common heterodimeric core enzyme, composed of PPP2CA, a 36 kDa catalytic subunit (subunit C), and PPP2R1A, a 65 kDa constant regulatory subunit (PR65 or subunit A), that associates with a variety of regulatory subunits. Proteins that associate with the core dimer include three families of regulatory subunits B (the R2/B/PR55/B55, R3/B''/PR72/PR130/PR59 and R5/B'/B56 families), the 48 kDa variable regulatory subunit, viral proteins, and cell signaling molecules. May indirectly interact with SGOL1, most probably through regulatory B56 subunits. Phosphatase component of the Integrator-PP2A (INTAC) complex, composed of the Integrator core complex and protein phosphatase 2A subunits PPP2CA and PPP2R1A. The cofactor is Mn(2+). It depends on Fe(3+) as a cofactor. Zn(2+) serves as cofactor. In terms of processing, reversibly methyl esterified on Leu-309 by leucine carboxyl methyltransferase 1 (LCMT1) and protein phosphatase methylesterase 1 (PPME1). Carboxyl methylation influences the affinity of the catalytic subunit for the different regulatory subunits, thereby modulating the PP2A holoenzyme's substrate specificity, enzyme activity and cellular localization. Phosphorylation of either threonine (by autophosphorylation-activated protein kinase) or tyrosine results in inactivation of the phosphatase. Auto-dephosphorylation has been suggested as a mechanism for reactivation.

It is found in the cytoplasm. The protein resides in the nucleus. Its subcellular location is the chromosome. The protein localises to the centromere. It localises to the cytoskeleton. It is found in the spindle pole. The enzyme catalyses O-phospho-L-seryl-[protein] + H2O = L-seryl-[protein] + phosphate. It carries out the reaction O-phospho-L-threonyl-[protein] + H2O = L-threonyl-[protein] + phosphate. With respect to regulation, inhibited by the interaction between PPP2R2A and ARPP19; this inhibition is enhanced when ARPP19 is phosphorylated. Inhibited by the interaction between PPP2R2A and PABIR1/FAM122A. In terms of biological role, PP2A is the major phosphatase for microtubule-associated proteins (MAPs). PP2A can modulate the activity of phosphorylase B kinase casein kinase 2, mitogen-stimulated S6 kinase, and MAP-2 kinase. Key mediator of a quality checkpoint during transcription elongation as part of the Integrator-PP2A (INTAC) complex. The INTAC complex drives premature transcription termination of transcripts that are unfavorably configured for transcriptional elongation: within the INTAC complex, PPP2CA catalyzes dephosphorylation of the C-terminal domain (CTD) of Pol II subunit POLR2A/RPB1 and SUPT5H/SPT5, thereby preventing transcriptional elongation. In Gallus gallus (Chicken), this protein is Serine/threonine-protein phosphatase 2A catalytic subunit alpha isoform (PPP2CA).